The sequence spans 65 residues: Large ribosomal subunit protein bL35 (65 aa).

This sequence belongs to the bacterial ribosomal protein bL35 family.

The chain is Large ribosomal subunit protein bL35 from Clostridium botulinum (strain Loch Maree / Type A3).